Reading from the N-terminus, the 554-residue chain is Macrophage colony-stimulating factor 1 (554 aa).

The first 32 residues, 1–32, serve as a signal peptide directing secretion; sequence MTAPGAAGRCPPTTWLGSLLLLVCLLASRSIT. Residues 33-496 lie on the Lumenal side of the membrane; that stretch reads EEVSEYCSHM…GSFSPQLQES (464 aa). 3 cysteine pairs are disulfide-bonded: cysteine 39-cysteine 122, cysteine 80-cysteine 171, and cysteine 134-cysteine 178. Asparagine 154 and asparagine 172 each carry an N-linked (GlcNAc...) asparagine glycan. Residues 224-488 form a disordered region; it reads EDSEGTEGSS…TGHERQSEGS (265 aa). Threonine 266 carries the phosphothreonine; by FAM20C modification. A glycan (O-linked (Xyl...) (chondroitin sulfate) serine) is linked at serine 309. Low complexity predominate over residues 344–354; it reads LSASSPLPASA. 2 O-linked (GalNAc...) threonine glycosylation sites follow: threonine 363 and threonine 365. Positions 404-433 are enriched in polar residues; sequence RISSLRPQGLSNPSTLSAQPQLSRSHSSGS. Residues 406–426 are O-glycosylated at one site; sequence SSLRPQGLSNPSTLSAQPQLS. Positions 440–453 are enriched in basic and acidic residues; that stretch reads LEGRRSTRDRRSPA. The helical transmembrane segment at 497-517 threads the bilayer; the sequence is VFHLLVPSVILVLLAVGGLLF. Over 518–554 the chain is Cytoplasmic; it reads YRWRRRSHQEPQRADSPLEQPEGSPLTQDDRQVELPV. The disordered stretch occupies residues 526–554; it reads QEPQRADSPLEQPEGSPLTQDDRQVELPV. Residues 545 to 554 show a composition bias toward basic and acidic residues; that stretch reads QDDRQVELPV.

Homodimer or heterodimer; disulfide-linked. Likely to exist in multiple forms: homodimer consisting of 2 identical 150-200 kDa proteoglycan subunits, heterodimer consisting of a 150-200 kDa proteoglycan subunit and a truncated 43 kDa subunit, and homodimer consisting of 2 identical 43 kDa subunits. Interacts with CSF1R. N-glycosylated. Post-translationally, O-glycosylated; contains chondroitin sulfate. O-glycosylated with core 1 or possibly core 8 glycans. In terms of processing, O-glycosylated.

The protein resides in the cell membrane. It is found in the secreted. The protein localises to the extracellular space. In terms of biological role, cytokine that plays an essential role in the regulation of survival, proliferation and differentiation of hematopoietic precursor cells, especially mononuclear phagocytes, such as macrophages and monocytes. Promotes the release of pro-inflammatory chemokines, and thereby plays an important role in innate immunity and in inflammatory processes. Plays an important role in the regulation of osteoclast proliferation and differentiation, the regulation of bone resorption, and is required for normal bone development. Required for normal male and female fertility. Promotes reorganization of the actin cytoskeleton, regulates formation of membrane ruffles, cell adhesion and cell migration. Plays a role in lipoprotein clearance. In Homo sapiens (Human), this protein is Macrophage colony-stimulating factor 1 (CSF1).